The following is a 422-amino-acid chain: Adenylosuccinate synthetase (422 aa).

Residues 11–17 (GDEGKGK) and 39–41 (GHT) each bind GTP. Residue Asp-12 is the Proton acceptor of the active site. Mg(2+)-binding residues include Asp-12 and Gly-39. Residues 12-15 (DEGK), 37-40 (NAGH), Thr-129, Arg-143, Asn-219, Thr-234, and Arg-298 contribute to the IMP site. His-40 serves as the catalytic Proton donor. Position 294–300 (294–300 (VTTGRKR)) interacts with substrate. GTP contacts are provided by residues Arg-300, 326 to 328 (KLD), and 411 to 413 (GTG).

This sequence belongs to the adenylosuccinate synthetase family. As to quaternary structure, homodimer. Mg(2+) serves as cofactor.

Its subcellular location is the cytoplasm. The enzyme catalyses IMP + L-aspartate + GTP = N(6)-(1,2-dicarboxyethyl)-AMP + GDP + phosphate + 2 H(+). It participates in purine metabolism; AMP biosynthesis via de novo pathway; AMP from IMP: step 1/2. Functionally, plays an important role in the de novo pathway and in the salvage pathway of purine nucleotide biosynthesis. Catalyzes the first committed step in the biosynthesis of AMP from IMP. This is Adenylosuccinate synthetase from Talaromyces stipitatus (strain ATCC 10500 / CBS 375.48 / QM 6759 / NRRL 1006) (Penicillium stipitatum).